Reading from the N-terminus, the 435-residue chain is Hexane cyclase xenF (435 aa).

A signal peptide spans 1–23 (MSPAANMFRTLTLTALVSAVVSA). Residues N81 and N156 are each glycosylated (N-linked (GlcNAc...) asparagine).

This sequence belongs to the Diels-Alderase family.

Its pathway is mycotoxin biosynthesis. Hexane cyclase; part of the gene cluster that mediates the biosynthesis of xenoacremones such as xenoacremone A, a compound that shows inhibitory activity toward the PI3K/AKT signaling pathway and which has the ability to induce apoptosis of A549 lung cancer cells. Within the pathway, cooperation of the hybrid PKS-NRPS xenE and the trans-acting enoyl reductase xenG is responsible for the formation of the reduced tyrosine-nonaketide derivative. The alpha/beta hydrolase xenA then accelerates intramolecular nucleophilic attack to give a pyrrolidone derivative. Subsequently, three enzymes, xenF, xenD, and xenC, coordinately participate in the conversion to xenoacremone B. XenF catalyzes sigmatropic rearrangement to form an A-ring, which leads to an unusual intermediate with a hexane ring, which is required for the formation of the tricarbocyclic product. Epoxidation catalyzed by xenD and the formation of the paracyclophane ether catalyzed by xenC initiate a spontaneous intramolecular Diels-Alder (IMDA) reaction to yield xenoacremone B. Spontaneous hydration of xenoacremone B leads to the formation of xenoacremone A, which undergoes subsequent methylation to afford xenoacremone C. The chain is Hexane cyclase xenF from Xenoacremonium sinensis (Endophyte fungus).